Reading from the N-terminus, the 133-residue chain is Carbohydrate-binding protein AWN (133 aa).

An N-acetylalanine modification is found at Ala-1. Intrachain disulfides connect Cys-9–Cys-30 and Cys-53–Cys-74. The 102-residue stretch at 9–110 (CGGVLRDPPG…SPFHIYYYAD (102 aa)) folds into the CUB domain. The segment at 73-110 (ICGGISLVFRSSSNIATIKYLRTSGQRASPFHIYYYAD) is heparin-binding.

Belongs to the spermadhesin family.

It is found in the secreted. In terms of biological role, mediates the binding of spermatozoa to component(s) of the egg's zona pellucida by a carbohydrate-binding mechanism. It is a secretory component of the male accessory glands being coated to the sperm surface at the time of ejaculation. This chain is Carbohydrate-binding protein AWN, found in Equus caballus (Horse).